Consider the following 564-residue polypeptide: Periplasmic [NiFe] hydrogenase large subunit (564 aa).

Residues cysteine 72, cysteine 75, cysteine 543, and cysteine 546 each coordinate Ni(2+). The propeptide occupies 550–564; it reads VIEPETNEILKFKVC.

It belongs to the [NiFe]/[NiFeSe] hydrogenase large subunit family. As to quaternary structure, heterodimer of a large and a small subunit. It depends on Ni(2+) as a cofactor.

It is found in the periplasm. It catalyses the reaction 2 Fe(III)-[cytochrome c3] + H2 = 2 Fe(II)-[cytochrome c3] + 2 H(+). In Solidesulfovibrio fructosivorans (Desulfovibrio fructosivorans), this protein is Periplasmic [NiFe] hydrogenase large subunit (hydB).